A 163-amino-acid chain; its full sequence is 6,7-dimethyl-8-ribityllumazine synthase (163 aa).

5-amino-6-(D-ribitylamino)uracil contacts are provided by residues Phe22, 56-58 (TFE), and 80-82 (AVI). 85–86 (GT) contacts (2S)-2-hydroxy-3-oxobutyl phosphate. The active-site Proton donor is the His88. Residue Met113 participates in 5-amino-6-(D-ribitylamino)uracil binding. A (2S)-2-hydroxy-3-oxobutyl phosphate-binding site is contributed by Arg127.

It belongs to the DMRL synthase family.

It catalyses the reaction (2S)-2-hydroxy-3-oxobutyl phosphate + 5-amino-6-(D-ribitylamino)uracil = 6,7-dimethyl-8-(1-D-ribityl)lumazine + phosphate + 2 H2O + H(+). It functions in the pathway cofactor biosynthesis; riboflavin biosynthesis; riboflavin from 2-hydroxy-3-oxobutyl phosphate and 5-amino-6-(D-ribitylamino)uracil: step 1/2. Functionally, catalyzes the formation of 6,7-dimethyl-8-ribityllumazine by condensation of 5-amino-6-(D-ribitylamino)uracil with 3,4-dihydroxy-2-butanone 4-phosphate. This is the penultimate step in the biosynthesis of riboflavin. The sequence is that of 6,7-dimethyl-8-ribityllumazine synthase from Anaeromyxobacter sp. (strain Fw109-5).